The sequence spans 146 residues: Probable transporter XF_0765 (146 aa).

4 helical membrane passes run Phe-9–Ile-29, Asn-46–Leu-66, Ile-91–Pro-111, and Leu-116–Ile-136.

This sequence belongs to the TsuA/YedE (TC 9.B.102) family.

The protein localises to the cell inner membrane. The polypeptide is Probable transporter XF_0765 (Xylella fastidiosa (strain 9a5c)).